The following is a 100-amino-acid chain: Cysteine-rich venom protein VAR1 (100 aa).

Residues 1 to 22 (MILLKLYLTLAAILCQSRGTTS) form the signal peptide. One can recognise an SCP domain in the interval 41-81 (NKHNDLRRTVDPPAKNMLKMSWDNIIAESAKRAALRCNQNE).

This sequence belongs to the CRISP family. In terms of processing, contains 8 disulfide bonds. As to expression, expressed by the venom gland.

The protein resides in the secreted. In terms of biological role, blocks ryanodine receptors, and potassium channels. In Varanus acanthurus (Ridge-tailed monitor), this protein is Cysteine-rich venom protein VAR1.